Consider the following 388-residue polypeptide: Protein phosphatase 2C 57 (388 aa).

The PPM-type phosphatase domain occupies 59 to 348 (RWGYTSVQGF…DNISIIIADL (290 aa)). Residues D93, G94, D296, and D339 each contribute to the Mn(2+) site. The helical transmembrane segment at 363 to 383 (VVVELVQAATTIGLVTVGIWM) threads the bilayer.

Belongs to the PP2C family. Requires Mg(2+) as cofactor. Mn(2+) serves as cofactor.

It localises to the membrane. The protein resides in the plastid. It is found in the chloroplast stroma. It carries out the reaction O-phospho-L-seryl-[protein] + H2O = L-seryl-[protein] + phosphate. It catalyses the reaction O-phospho-L-threonyl-[protein] + H2O = L-threonyl-[protein] + phosphate. Protein phosphatase specifically required for efficient dephosphorylation of the light-harvesting complex II outer antennae (LCHII) and transition from state 2 to state 1. State transition plays a central role in response to environmental changes and allows to adjust to changing light conditions via the redistribution of light excitation energy between photosystem II (PSII) and photosystem I (PSI) in a short time by relocating LHCII proteins. Mainly responsible for the dephosphorylation of Lhcb1 and Lhcb2 but not of the photosystem II core proteins. This is Protein phosphatase 2C 57 from Arabidopsis thaliana (Mouse-ear cress).